The chain runs to 262 residues: Proteasome subunit alpha (262 aa).

The segment at L235–A262 is disordered.

This sequence belongs to the peptidase T1A family. The 20S proteasome core is composed of 14 alpha and 14 beta subunits that assemble into four stacked heptameric rings, resulting in a barrel-shaped structure. The two inner rings, each composed of seven catalytic beta subunits, are sandwiched by two outer rings, each composed of seven alpha subunits. The catalytic chamber with the active sites is on the inside of the barrel. Has a gated structure, the ends of the cylinder being occluded by the N-termini of the alpha-subunits. Is capped by the proteasome-associated ATPase, ARC.

It is found in the cytoplasm. The protein operates within protein degradation; proteasomal Pup-dependent pathway. With respect to regulation, the formation of the proteasomal ATPase ARC-20S proteasome complex, likely via the docking of the C-termini of ARC into the intersubunit pockets in the alpha-rings, may trigger opening of the gate for substrate entry. Interconversion between the open-gate and close-gate conformations leads to a dynamic regulation of the 20S proteasome proteolysis activity. In terms of biological role, component of the proteasome core, a large protease complex with broad specificity involved in protein degradation. The chain is Proteasome subunit alpha from Gordonia bronchialis (strain ATCC 25592 / DSM 43247 / BCRC 13721 / JCM 3198 / KCTC 3076 / NBRC 16047 / NCTC 10667) (Rhodococcus bronchialis).